The primary structure comprises 58 residues: UPF0391 membrane protein Sputcn32_1322 (58 aa).

Helical transmembrane passes span L6–A26 and A28–V48.

This sequence belongs to the UPF0391 family.

It is found in the cell membrane. This chain is UPF0391 membrane protein Sputcn32_1322, found in Shewanella putrefaciens (strain CN-32 / ATCC BAA-453).